The primary structure comprises 879 residues: Alanine--tRNA ligase (879 aa).

Residues histidine 566, histidine 570, cysteine 668, and histidine 672 each coordinate Zn(2+).

Belongs to the class-II aminoacyl-tRNA synthetase family. The cofactor is Zn(2+).

It localises to the cytoplasm. The enzyme catalyses tRNA(Ala) + L-alanine + ATP = L-alanyl-tRNA(Ala) + AMP + diphosphate. Its function is as follows. Catalyzes the attachment of alanine to tRNA(Ala) in a two-step reaction: alanine is first activated by ATP to form Ala-AMP and then transferred to the acceptor end of tRNA(Ala). Also edits incorrectly charged Ser-tRNA(Ala) and Gly-tRNA(Ala) via its editing domain. The chain is Alanine--tRNA ligase from Clostridium botulinum (strain Loch Maree / Type A3).